The primary structure comprises 158 residues: SsrA-binding protein (158 aa).

This sequence belongs to the SmpB family.

Its subcellular location is the cytoplasm. Functionally, required for rescue of stalled ribosomes mediated by trans-translation. Binds to transfer-messenger RNA (tmRNA), required for stable association of tmRNA with ribosomes. tmRNA and SmpB together mimic tRNA shape, replacing the anticodon stem-loop with SmpB. tmRNA is encoded by the ssrA gene; the 2 termini fold to resemble tRNA(Ala) and it encodes a 'tag peptide', a short internal open reading frame. During trans-translation Ala-aminoacylated tmRNA acts like a tRNA, entering the A-site of stalled ribosomes, displacing the stalled mRNA. The ribosome then switches to translate the ORF on the tmRNA; the nascent peptide is terminated with the 'tag peptide' encoded by the tmRNA and targeted for degradation. The ribosome is freed to recommence translation, which seems to be the essential function of trans-translation. The polypeptide is SsrA-binding protein (Roseiflexus sp. (strain RS-1)).